The primary structure comprises 268 residues: MSNKVHLGHTARKRFGQNFLTDGNVINRIVGAIAPDNNHVMVEIGPGLGALTEPVAMAVDNLTVVELDRDLVERLHKHPVLKDKLTIHQGDALQFDFSQLVVPGKKLKVFGNLPYNISTPLMFHLFEFAEQIETMHFMLQKEVVLRLSASPGCKAYGRLTVMAQYFCQVVPVLEVPPHSFTPAPKVDSAVVRLLPYAEKPFPCKDVNVLRQLCTTAFNMRRKTLRNNLKHMLSDAEFEQLGIDQSQRPEQISVEQYVAMANMICDRKA.

S-adenosyl-L-methionine is bound by residues asparagine 18, leucine 20, glycine 45, glutamate 66, aspartate 91, and asparagine 112.

Belongs to the class I-like SAM-binding methyltransferase superfamily. rRNA adenine N(6)-methyltransferase family. RsmA subfamily.

Its subcellular location is the cytoplasm. It catalyses the reaction adenosine(1518)/adenosine(1519) in 16S rRNA + 4 S-adenosyl-L-methionine = N(6)-dimethyladenosine(1518)/N(6)-dimethyladenosine(1519) in 16S rRNA + 4 S-adenosyl-L-homocysteine + 4 H(+). Functionally, specifically dimethylates two adjacent adenosines (A1518 and A1519) in the loop of a conserved hairpin near the 3'-end of 16S rRNA in the 30S particle. May play a critical role in biogenesis of 30S subunits. The protein is Ribosomal RNA small subunit methyltransferase A of Shewanella putrefaciens (strain CN-32 / ATCC BAA-453).